The chain runs to 142 residues: Universal stress protein C (142 aa).

The protein belongs to the universal stress protein A family.

It is found in the cytoplasm. Required for resistance to DNA-damaging agents. The sequence is that of Universal stress protein C (uspC) from Salmonella typhimurium (strain LT2 / SGSC1412 / ATCC 700720).